Consider the following 167-residue polypeptide: Transcription factor E (167 aa).

The HTH TFE/IIEalpha-type domain occupies 5–87 (ENPIHRAYLL…LWKICPESLD (83 aa)).

This sequence belongs to the TFE family. In terms of assembly, monomer. Interaction with RNA polymerase subunits RpoF and RpoE is necessary for Tfe stimulatory transcription activity. Able to interact with Tbp and RNA polymerase in the absence of DNA promoter. Interacts both with the preinitiation and elongation complexes.

Transcription factor that plays a role in the activation of archaeal genes transcribed by RNA polymerase. Facilitates transcription initiation by enhancing TATA-box recognition by TATA-box-binding protein (Tbp), and transcription factor B (Tfb) and RNA polymerase recruitment. Not absolutely required for transcription in vitro, but particularly important in cases where Tbp or Tfb function is not optimal. It dynamically alters the nucleic acid-binding properties of RNA polymerases by stabilizing the initiation complex and destabilizing elongation complexes. Seems to translocate with the RNA polymerase following initiation and acts by binding to the non template strand of the transcription bubble in elongation complexes. The polypeptide is Transcription factor E (Methanothrix thermoacetophila (strain DSM 6194 / JCM 14653 / NBRC 101360 / PT) (Methanosaeta thermophila)).